Reading from the N-terminus, the 196-residue chain is Putative AAA family ATPase L572 (196 aa).

ATP is bound at residue 32–39 (NAVNCKET).

It belongs to the AAA ATPase family.

The polypeptide is Putative AAA family ATPase L572 (Acanthamoeba polyphaga mimivirus (APMV)).